A 245-amino-acid polypeptide reads, in one-letter code: 5'-nucleotidase SurE (245 aa).

A divalent metal cation contacts are provided by Asp-8, Asp-9, Ser-39, and Asn-91.

Belongs to the SurE nucleotidase family. The cofactor is a divalent metal cation.

Its subcellular location is the cytoplasm. It carries out the reaction a ribonucleoside 5'-phosphate + H2O = a ribonucleoside + phosphate. Functionally, nucleotidase that shows phosphatase activity on nucleoside 5'-monophosphates. The chain is 5'-nucleotidase SurE from Janthinobacterium sp. (strain Marseille) (Minibacterium massiliensis).